We begin with the raw amino-acid sequence, 122 residues long: Large ribosomal subunit protein uL18 (122 aa).

Residues 1 to 21 show a composition bias toward basic residues; that stretch reads MSKLSRKQQTQKRHRRLRRHI. The disordered stretch occupies residues 1 to 25; the sequence is MSKLSRKQQTQKRHRRLRRHITGTS.

Belongs to the universal ribosomal protein uL18 family. As to quaternary structure, part of the 50S ribosomal subunit; part of the 5S rRNA/L5/L18/L25 subcomplex. Contacts the 5S and 23S rRNAs.

This is one of the proteins that bind and probably mediate the attachment of the 5S RNA into the large ribosomal subunit, where it forms part of the central protuberance. The sequence is that of Large ribosomal subunit protein uL18 from Synechococcus sp. (strain CC9902).